The sequence spans 105 residues: Probable tetrachloroethene reductive dehalogenase membrane anchor protein (105 aa).

3 consecutive transmembrane segments (helical) span residues 3-23, 35-55, and 66-86; these read IYDV…QYGI, IPLQ…LAWG, and AIGM…IITY.

The protein belongs to the PceB family.

Its subcellular location is the cell membrane. In terms of biological role, may act as a membrane anchor for the tetrachloroethene reductive dehalogenase PceA. This chain is Probable tetrachloroethene reductive dehalogenase membrane anchor protein, found in Desulfitobacterium hafniense (Desulfitobacterium frappieri).